The chain runs to 194 residues: Imidazoleglycerol-phosphate dehydratase (194 aa).

This sequence belongs to the imidazoleglycerol-phosphate dehydratase family.

The protein resides in the cytoplasm. The catalysed reaction is D-erythro-1-(imidazol-4-yl)glycerol 3-phosphate = 3-(imidazol-4-yl)-2-oxopropyl phosphate + H2O. It functions in the pathway amino-acid biosynthesis; L-histidine biosynthesis; L-histidine from 5-phospho-alpha-D-ribose 1-diphosphate: step 6/9. This Chlorobaculum tepidum (strain ATCC 49652 / DSM 12025 / NBRC 103806 / TLS) (Chlorobium tepidum) protein is Imidazoleglycerol-phosphate dehydratase.